Consider the following 244-residue polypeptide: Phosphoadenosine 5'-phosphosulfate reductase (244 aa).

C239 functions as the Nucleophile; cysteine thiosulfonate intermediate in the catalytic mechanism.

The protein belongs to the PAPS reductase family. CysH subfamily.

Its subcellular location is the cytoplasm. The enzyme catalyses [thioredoxin]-disulfide + sulfite + adenosine 3',5'-bisphosphate + 2 H(+) = [thioredoxin]-dithiol + 3'-phosphoadenylyl sulfate. Its pathway is sulfur metabolism; hydrogen sulfide biosynthesis; sulfite from sulfate: step 3/3. Functionally, catalyzes the formation of sulfite from phosphoadenosine 5'-phosphosulfate (PAPS) using thioredoxin as an electron donor. In Klebsiella pneumoniae subsp. pneumoniae (strain ATCC 700721 / MGH 78578), this protein is Phosphoadenosine 5'-phosphosulfate reductase.